Reading from the N-terminus, the 211-residue chain is Heat shock 70 kDa protein 4L (211 aa).

At serine 161 the chain carries Phosphoserine.

Belongs to the heat shock protein 70 family. In terms of assembly, homodimer.

The protein resides in the cytoplasm. Its subcellular location is the nucleus. In terms of biological role, possesses chaperone activity in vitro where it inhibits aggregation of citrate synthase. The chain is Heat shock 70 kDa protein 4L from Mesocricetus auratus (Golden hamster).